The following is a 1412-amino-acid chain: DNA-directed RNA polymerase subunit beta' (1412 aa).

Zn(2+)-binding residues include Cys70, Cys72, Cys85, and Cys88. Asp458, Asp460, and Asp462 together coordinate Mg(2+). Zn(2+) contacts are provided by Cys813, Cys887, Cys894, and Cys897. A disordered region spans residues 1388–1412 (EQALLTPATTAEAVVGEEPAPPPAQ). A compositionally biased stretch (low complexity) spans 1393 to 1405 (TPATTAEAVVGEE).

Belongs to the RNA polymerase beta' chain family. In terms of assembly, the RNAP catalytic core consists of 2 alpha, 1 beta, 1 beta' and 1 omega subunit. When a sigma factor is associated with the core the holoenzyme is formed, which can initiate transcription. The cofactor is Mg(2+). It depends on Zn(2+) as a cofactor.

The enzyme catalyses RNA(n) + a ribonucleoside 5'-triphosphate = RNA(n+1) + diphosphate. DNA-dependent RNA polymerase catalyzes the transcription of DNA into RNA using the four ribonucleoside triphosphates as substrates. In Methylibium petroleiphilum (strain ATCC BAA-1232 / LMG 22953 / PM1), this protein is DNA-directed RNA polymerase subunit beta'.